We begin with the raw amino-acid sequence, 102 residues long: Monothiol glutaredoxin-S5 (102 aa).

The region spanning 1-101 (MENLQKMISE…PMLKRAGALW (101 aa)) is the Glutaredoxin domain. Cysteine 21 is a binding site for [2Fe-2S] cluster. The short motif at 99–102 (ALWL) is the Responsive for interaction with TGA factors element.

This sequence belongs to the glutaredoxin family. CC-type subfamily.

It localises to the cytoplasm. Its subcellular location is the nucleus. Functionally, may only reduce GSH-thiol disulfides, but not protein disulfides. This is Monothiol glutaredoxin-S5 (GRXS5) from Arabidopsis thaliana (Mouse-ear cress).